Here is a 337-residue protein sequence, read N- to C-terminus: MQSIPIKNVGESRLVDPFQRQYYYLRLSITDQCNFRCTYCLPDGYQPEANKPSFLTLKEITHLAQAFAEMGTEKIRLTGGEPTLRKDFISIAESIANIEGIRQLAVTTNGYRMAKDVADWKKVGITSINVSVDSLDPKMFHQITGINKFDDVMRGIDRAFEAGYNKVKVNSVLMKNLNDKEFEQFLVWVKDRPIQMRFIELMQTGEMDSFFDRYHLSGQVLADKLLKNGWILQHKSHTDGPAKVFTHSDYAGEIGLIMPYEKNFCASCNRLRVSAKGKLHLCLFGEEGIELRDLLQSHEQQAILQARIFAALQGKREHHYLHIGDTGVRNHLASIGG.

Positions 17–243 (PFQRQYYYLR…HKSHTDGPAK (227 aa)) constitute a Radical SAM core domain. Arg26 provides a ligand contact to GTP. Residues Cys33 and Cys37 each contribute to the [4Fe-4S] cluster site. Tyr39 lines the S-adenosyl-L-methionine pocket. Cys40 provides a ligand contact to [4Fe-4S] cluster. Position 76 (Arg76) interacts with GTP. Gly80 provides a ligand contact to S-adenosyl-L-methionine. GTP is bound at residue Thr107. An S-adenosyl-L-methionine-binding site is contributed by Ser131. Lys168 serves as a coordination point for GTP. Met202 is a binding site for S-adenosyl-L-methionine. Residues Cys265 and Cys268 each contribute to the [4Fe-4S] cluster site. Residue 270–272 (RLR) coordinates GTP. A [4Fe-4S] cluster-binding site is contributed by Cys282.

The protein belongs to the radical SAM superfamily. MoaA family. In terms of assembly, monomer and homodimer. It depends on [4Fe-4S] cluster as a cofactor.

The catalysed reaction is GTP + AH2 + S-adenosyl-L-methionine = (8S)-3',8-cyclo-7,8-dihydroguanosine 5'-triphosphate + 5'-deoxyadenosine + L-methionine + A + H(+). Its pathway is cofactor biosynthesis; molybdopterin biosynthesis. In terms of biological role, catalyzes the cyclization of GTP to (8S)-3',8-cyclo-7,8-dihydroguanosine 5'-triphosphate. In Haemophilus influenzae (strain PittEE), this protein is GTP 3',8-cyclase.